The primary structure comprises 341 residues: Phosphate acyltransferase (341 aa).

It belongs to the PlsX family. In terms of assembly, homodimer. Probably interacts with PlsY.

The protein localises to the cytoplasm. The enzyme catalyses a fatty acyl-[ACP] + phosphate = an acyl phosphate + holo-[ACP]. The protein operates within lipid metabolism; phospholipid metabolism. Its function is as follows. Catalyzes the reversible formation of acyl-phosphate (acyl-PO(4)) from acyl-[acyl-carrier-protein] (acyl-ACP). This enzyme utilizes acyl-ACP as fatty acyl donor, but not acyl-CoA. The chain is Phosphate acyltransferase from Vibrio cholerae serotype O1 (strain ATCC 39541 / Classical Ogawa 395 / O395).